The following is a 130-amino-acid chain: Small ribosomal subunit protein uS11 (130 aa).

Belongs to the universal ribosomal protein uS11 family. Part of the 30S ribosomal subunit. Interacts with proteins S7 and S18. Binds to IF-3.

Functionally, located on the platform of the 30S subunit, it bridges several disparate RNA helices of the 16S rRNA. Forms part of the Shine-Dalgarno cleft in the 70S ribosome. The chain is Small ribosomal subunit protein uS11 from Sulfurimonas denitrificans (strain ATCC 33889 / DSM 1251) (Thiomicrospira denitrificans (strain ATCC 33889 / DSM 1251)).